A 597-amino-acid chain; its full sequence is Vacuolar protein sorting-associated protein 33A (597 aa).

It belongs to the STXBP/unc-18/SEC1 family. Core component of at least two putative endosomal tethering complexes, the homotypic fusion and vacuole protein sorting (HOPS) complex and the class C core vacuole/endosome tethering (CORVET) complex. Their common core is composed of the class C Vps proteins VPS11, VPS16, VPS18 and VPS33A, which in HOPS further associates with VPS39 and VPS41 and in CORVET with VPS8 and TGFBRAP1. Interacts with RAB5C, UVRAG, STX17, MON1A and MON1B. Associates with adaptor protein complex 3 (AP-3) and clathrin. Interacts with PLEKHM1. As to expression, ubiquitous.

It localises to the cytoplasmic vesicle. Its subcellular location is the late endosome membrane. The protein localises to the lysosome membrane. The protein resides in the early endosome. It is found in the autophagosome. It localises to the clathrin-coated vesicle. Its function is as follows. Plays a role in vesicle-mediated protein trafficking to lysosomal compartments including the endocytic membrane transport and autophagic pathways. Believed to act as a core component of the putative HOPS and CORVET endosomal tethering complexes which are proposed to be involved in the Rab5-to-Rab7 endosome conversion probably implicating MON1A/B, and via binding SNAREs and SNARE complexes to mediate tethering and docking events during SNARE-mediated membrane fusion. The HOPS complex is proposed to be recruited to Rab7 on the late endosomal membrane and to regulate late endocytic, phagocytic and autophagic traffic towards lysosomes. The CORVET complex is proposed to function as a Rab5 effector to mediate early endosome fusion probably in specific endosome subpopulations. Required for fusion of endosomes and autophagosomes with lysosomes; the function is dependent on its association with VPS16 but not VIPAS39. The function in autophagosome-lysosome fusion implicates STX17 but not UVRAG. The protein is Vacuolar protein sorting-associated protein 33A (Vps33a) of Rattus norvegicus (Rat).